A 424-amino-acid polypeptide reads, in one-letter code: MAKQIQAIRGMNDILPTQSPLWQKLETVLRETVSAYGYSEIRTPIVESTDLFKRSIGEVTDIVEKEMYTFDDRNGDSLTLRPEGTASTVRAGNEHGLLYNQEQRLWYMGPMFRHERPQKGRYRQFNQFGVEVYGIGSADVDAEVLMLSHRLWEKLGITEHVTLELNTLGDPAERAAYRDALIAYLEQFKEQLDEESQRRMYTNPLRVLDTKNPDVQALLTDAPELMEYLGEETRAHFSHLCELLDAVGIKYVINPRLVRGLDYYNRTVFEWVTSSLGAQGTVLAGGRYDGLVEQLGGKNTPAVGFAMGLERIVLMLETLELTKDIPATVDVYVTAMGDASKIEAIKIAQSLRSELPHLRVMSHCGGGNFKKQMKRADKSGAQVALVIGEDELANNQVAVKYLREKKEQELVARDALATYIAELI.

The protein belongs to the class-II aminoacyl-tRNA synthetase family. Homodimer.

It is found in the cytoplasm. It catalyses the reaction tRNA(His) + L-histidine + ATP = L-histidyl-tRNA(His) + AMP + diphosphate + H(+). In Shewanella sediminis (strain HAW-EB3), this protein is Histidine--tRNA ligase.